The chain runs to 188 residues: Peptidyl-tRNA hydrolase (188 aa).

Y14 is a binding site for tRNA. Residue H19 is the Proton acceptor of the active site. Positions 60 and 62 each coordinate tRNA.

Belongs to the PTH family. Monomer.

It localises to the cytoplasm. It carries out the reaction an N-acyl-L-alpha-aminoacyl-tRNA + H2O = an N-acyl-L-amino acid + a tRNA + H(+). Its function is as follows. Hydrolyzes ribosome-free peptidyl-tRNAs (with 1 or more amino acids incorporated), which drop off the ribosome during protein synthesis, or as a result of ribosome stalling. In terms of biological role, catalyzes the release of premature peptidyl moieties from peptidyl-tRNA molecules trapped in stalled 50S ribosomal subunits, and thus maintains levels of free tRNAs and 50S ribosomes. In Mycoplasmopsis agalactiae (strain NCTC 10123 / CIP 59.7 / PG2) (Mycoplasma agalactiae), this protein is Peptidyl-tRNA hydrolase.